A 155-amino-acid polypeptide reads, in one-letter code: UPF0178 protein Gmet_1725 (155 aa).

It belongs to the UPF0178 family.

The chain is UPF0178 protein Gmet_1725 from Geobacter metallireducens (strain ATCC 53774 / DSM 7210 / GS-15).